Reading from the N-terminus, the 1070-residue chain is DNA-directed RNA polymerase subunit beta (1070 aa).

Belongs to the RNA polymerase beta chain family. In terms of assembly, in plastids the minimal PEP RNA polymerase catalytic core is composed of four subunits: alpha, beta, beta', and beta''. When a (nuclear-encoded) sigma factor is associated with the core the holoenzyme is formed, which can initiate transcription.

It localises to the plastid. It is found in the chloroplast. The enzyme catalyses RNA(n) + a ribonucleoside 5'-triphosphate = RNA(n+1) + diphosphate. Functionally, DNA-dependent RNA polymerase catalyzes the transcription of DNA into RNA using the four ribonucleoside triphosphates as substrates. The sequence is that of DNA-directed RNA polymerase subunit beta from Lotus japonicus (Lotus corniculatus var. japonicus).